Reading from the N-terminus, the 440-residue chain is Phosphatidylcholine-sterol acyltransferase (440 aa).

Residues 1–24 (MGPPGSPWQWVLLLLGLLLPPAAP) form the signal peptide. Residue Asn-44 is glycosylated (N-linked (GlcNAc...) asparagine). Cys-74 and Cys-98 are joined by a disulfide. N-linked (GlcNAc...) asparagine glycosylation is present at Asn-108. The Nucleophile role is filled by Ser-205. N-linked (GlcNAc...) asparagine glycosylation occurs at Asn-296. Cys-337 and Cys-380 form a disulfide bridge. Catalysis depends on charge relay system residues Asp-369 and His-401. N-linked (GlcNAc...) asparagine glycosylation is present at Asn-408.

Belongs to the AB hydrolase superfamily. Lipase family. Detected in blood plasma (at protein level). Highly expressed in liver.

It localises to the secreted. The catalysed reaction is a sterol + a 1,2-diacyl-sn-glycero-3-phosphocholine = a sterol ester + a 1-acyl-sn-glycero-3-phosphocholine. The enzyme catalyses a 1-O-alkyl-2-acetyl-sn-glycero-3-phosphocholine + H2O = a 1-O-alkyl-sn-glycero-3-phosphocholine + acetate + H(+). It carries out the reaction a 1-hexadecanoyl-2-acyl-sn-glycero-3-phosphocholine + (24S)-hydroxycholesterol = (24S)-24-hydroxycholesterol ester + 1-hexadecanoyl-sn-glycero-3-phosphocholine. It catalyses the reaction (24S)-hydroxycholesterol + 1-hexadecanoyl-2-(9Z,12Z-octadecadienoyl)-sn-glycero-3-phosphocholine = (24S)-hydroxycholesterol 3-linoleoate + 1-hexadecanoyl-sn-glycero-3-phosphocholine. The catalysed reaction is 1-hexadecanoyl-2-(5Z,8Z,11Z,14Z-eicosatetraenoyl)-sn-glycero-3-phosphocholine + cholesterol = cholesteryl (5Z,8Z,11Z,14Z)-eicosatetraenoate + 1-hexadecanoyl-sn-glycero-3-phosphocholine. The enzyme catalyses 1-hexadecanoyl-2-(9Z-octadecenoyl)-sn-glycero-3-phosphocholine + cholesterol = cholesteryl (9Z-octadecenoate) + 1-hexadecanoyl-sn-glycero-3-phosphocholine. It carries out the reaction 1-hexadecanoyl-2-(8Z,11Z,14Z-eicosatrienoyl)-sn-glycero-3-phosphocholine + cholesterol = cholesteryl (8Z,11Z,14Z)-eicosatrienoate + 1-hexadecanoyl-sn-glycero-3-phosphocholine. It catalyses the reaction 1-hexadecanoyl-2-(5Z,8Z,11Z-eicosatrienoyl)-sn-glycero-3-phosphocholine + cholesterol = cholesteryl (5Z,8Z,11Z)-eicosatrienoate + 1-hexadecanoyl-sn-glycero-3-phosphocholine. The catalysed reaction is 1-hexadecanoyl-2-(5Z,8Z,11Z,14Z,17Z-eicosapentaenoyl)-sn-glycero-3-phosphocholine + cholesterol = (5Z,8Z,11Z,14Z,17Z-eicosapentaenoyl)-cholesterol + 1-hexadecanoyl-sn-glycero-3-phosphocholine. The enzyme catalyses 1-hexadecanoyl-2-(9Z,12Z-octadecadienoyl)-sn-glycero-3-phosphocholine + cholesterol = cholesteryl (9Z,12Z)-octadecadienoate + 1-hexadecanoyl-sn-glycero-3-phosphocholine. It carries out the reaction 1-hexadecanoyl-2-(6Z,9Z,12Z-octadecatrienoyl)-sn-glycero-3-phosphocholine + cholesterol = (6Z,9Z,12Z-octadecatrienoyl)-cholesterol + 1-hexadecanoyl-sn-glycero-3-phosphocholine. It catalyses the reaction 1-hexadecanoyl-2-(11Z,14Z,17Z-eicosatrienoyl)-sn-glycero-3-phosphocholine + cholesterol = (11Z,14Z,17Z-eicosatrienoyl)-cholesterol + 1-hexadecanoyl-sn-glycero-3-phosphocholine. The catalysed reaction is 1-hexadecanoyl-2-(9Z,12Z,15Z-octadecatrienoyl)-sn-glycero-3-phosphocholine + cholesterol = (9Z,12Z,15Z-octadecatrienoyl)-cholesterol + 1-hexadecanoyl-sn-glycero-3-phosphocholine. The enzyme catalyses 1-hexadecanoyl-2-(9Z,12Z-octadecadienoyl)-sn-glycero-3-phosphocholine + H2O = (9Z,12Z)-octadecadienoate + 1-hexadecanoyl-sn-glycero-3-phosphocholine + H(+). It carries out the reaction 1-hexadecanoyl-2-(5Z,8Z,11Z,14Z-eicosatetraenoyl)-sn-glycero-3-phosphocholine + H2O = 1-hexadecanoyl-sn-glycero-3-phosphocholine + (5Z,8Z,11Z,14Z)-eicosatetraenoate + H(+). It catalyses the reaction a 1-O-alkyl-2-acetyl-sn-glycero-3-phosphocholine + 1-hexadecanoyl-sn-glycero-3-phosphocholine = 1-hexadecanoyl-2-acetyl-sn-glycero-3-phosphocholine + a 1-O-alkyl-sn-glycero-3-phosphocholine. Functionally, central enzyme in the extracellular metabolism of plasma lipoproteins. Synthesized mainly in the liver and secreted into plasma where it converts cholesterol and phosphatidylcholines (lecithins) to cholesteryl esters and lysophosphatidylcholines on the surface of high and low density lipoproteins (HDLs and LDLs). The cholesterol ester is then transported back to the liver. Also produced in the brain by primary astrocytes, and esterifies free cholesterol on nascent APOE-containing lipoproteins secreted from glia and influences cerebral spinal fluid (CSF) APOE- and APOA1 levels. Together with APOE and the cholesterol transporter ABCA1, plays a key role in the maturation of glial-derived, nascent lipoproteins. Required for remodeling high-density lipoprotein particles into their spherical forms. Has a preference for plasma 16:0-18:2 or 18:O-18:2 phosphatidylcholines. Catalyzes the hydrolysis of 1-O-alkyl-2-acetyl-sn-glycero-3-phosphocholine (platelet-activating factor or PAF) to 1-O-alkyl-sn-glycero-3-phosphocholine (lyso-PAF). Also catalyzes the transfer of the acetate group from PAF to 1-hexadecanoyl-sn-glycero-3-phosphocholine forming lyso-PAF. Catalyzes the esterification of (24S)-hydroxycholesterol (24(S)OH-C), also known as cerebrosterol to produce 24(S)OH-C monoesters. The protein is Phosphatidylcholine-sterol acyltransferase (LCAT) of Oryctolagus cuniculus (Rabbit).